A 117-amino-acid chain; its full sequence is Large ribosomal subunit protein bL19 (117 aa).

The protein belongs to the bacterial ribosomal protein bL19 family.

Its function is as follows. This protein is located at the 30S-50S ribosomal subunit interface and may play a role in the structure and function of the aminoacyl-tRNA binding site. The polypeptide is Large ribosomal subunit protein bL19 (Proteus mirabilis (strain HI4320)).